The primary structure comprises 463 residues: Argininosuccinate lyase (463 aa).

Belongs to the lyase 1 family. Argininosuccinate lyase subfamily.

The protein resides in the cytoplasm. It carries out the reaction 2-(N(omega)-L-arginino)succinate = fumarate + L-arginine. The protein operates within amino-acid biosynthesis; L-arginine biosynthesis; L-arginine from L-ornithine and carbamoyl phosphate: step 3/3. This is Argininosuccinate lyase from Streptococcus pneumoniae (strain JJA).